The following is a 475-amino-acid chain: Ribulose bisphosphate carboxylase large chain (475 aa).

Positions 1-2 (MS) are excised as a propeptide. Proline 3 is subject to N-acetylproline. The residue at position 14 (lysine 14) is an N6,N6,N6-trimethyllysine. Residues asparagine 123 and threonine 173 each contribute to the substrate site. Lysine 175 (proton acceptor) is an active-site residue. Lysine 177 serves as a coordination point for substrate. 3 residues coordinate Mg(2+): lysine 201, aspartate 203, and glutamate 204. Lysine 201 carries the post-translational modification N6-carboxylysine. Catalysis depends on histidine 294, which acts as the Proton acceptor. Residues histidine 327 and serine 379 each coordinate substrate.

It belongs to the RuBisCO large chain family. Type I subfamily. Heterohexadecamer of 8 large chains and 8 small chains; disulfide-linked. The disulfide link is formed within the large subunit homodimers. It depends on Mg(2+) as a cofactor. Post-translationally, the disulfide bond which can form in the large chain dimeric partners within the hexadecamer appears to be associated with oxidative stress and protein turnover.

The protein resides in the plastid. It is found in the chloroplast. It carries out the reaction 2 (2R)-3-phosphoglycerate + 2 H(+) = D-ribulose 1,5-bisphosphate + CO2 + H2O. The enzyme catalyses D-ribulose 1,5-bisphosphate + O2 = 2-phosphoglycolate + (2R)-3-phosphoglycerate + 2 H(+). Its function is as follows. RuBisCO catalyzes two reactions: the carboxylation of D-ribulose 1,5-bisphosphate, the primary event in carbon dioxide fixation, as well as the oxidative fragmentation of the pentose substrate in the photorespiration process. Both reactions occur simultaneously and in competition at the same active site. This chain is Ribulose bisphosphate carboxylase large chain, found in Amaranthus hypochondriacus (Prince-of-Wales feather).